A 321-amino-acid chain; its full sequence is Aspartate carbamoyltransferase catalytic subunit (321 aa).

Carbamoyl phosphate contacts are provided by R70 and T71. Residue K98 participates in L-aspartate binding. Positions 120, 148, and 151 each coordinate carbamoyl phosphate. L-aspartate contacts are provided by R181 and R235. 2 residues coordinate carbamoyl phosphate: G276 and P277.

This sequence belongs to the aspartate/ornithine carbamoyltransferase superfamily. ATCase family. Heterododecamer (2C3:3R2) of six catalytic PyrB chains organized as two trimers (C3), and six regulatory PyrI chains organized as three dimers (R2).

It catalyses the reaction carbamoyl phosphate + L-aspartate = N-carbamoyl-L-aspartate + phosphate + H(+). Its pathway is pyrimidine metabolism; UMP biosynthesis via de novo pathway; (S)-dihydroorotate from bicarbonate: step 2/3. Catalyzes the condensation of carbamoyl phosphate and aspartate to form carbamoyl aspartate and inorganic phosphate, the committed step in the de novo pyrimidine nucleotide biosynthesis pathway. The protein is Aspartate carbamoyltransferase catalytic subunit of Gluconacetobacter diazotrophicus (strain ATCC 49037 / DSM 5601 / CCUG 37298 / CIP 103539 / LMG 7603 / PAl5).